The chain runs to 415 residues: Serine hydroxymethyltransferase (415 aa).

(6S)-5,6,7,8-tetrahydrofolate-binding positions include Leu-121 and 125-127 (GHL). Lys-230 is subject to N6-(pyridoxal phosphate)lysine. 355 to 357 (SPF) provides a ligand contact to (6S)-5,6,7,8-tetrahydrofolate.

The protein belongs to the SHMT family. In terms of assembly, homodimer. Requires pyridoxal 5'-phosphate as cofactor.

It localises to the cytoplasm. It catalyses the reaction (6R)-5,10-methylene-5,6,7,8-tetrahydrofolate + glycine + H2O = (6S)-5,6,7,8-tetrahydrofolate + L-serine. The protein operates within one-carbon metabolism; tetrahydrofolate interconversion. Its pathway is amino-acid biosynthesis; glycine biosynthesis; glycine from L-serine: step 1/1. Its function is as follows. Catalyzes the reversible interconversion of serine and glycine with tetrahydrofolate (THF) serving as the one-carbon carrier. This reaction serves as the major source of one-carbon groups required for the biosynthesis of purines, thymidylate, methionine, and other important biomolecules. Also exhibits THF-independent aldolase activity toward beta-hydroxyamino acids, producing glycine and aldehydes, via a retro-aldol mechanism. The protein is Serine hydroxymethyltransferase of Lactococcus lactis subsp. lactis (strain IL1403) (Streptococcus lactis).